The sequence spans 367 residues: Cytochrome P450 119 (367 aa).

Residues His76, Arg80, Thr257, Arg259, His315, and Cys317 each coordinate heme.

It belongs to the cytochrome P450 family. It depends on heme as a cofactor.

The protein localises to the cytoplasm. The polypeptide is Cytochrome P450 119 (cyp119) (Sulfurisphaera tokodaii (strain DSM 16993 / JCM 10545 / NBRC 100140 / 7) (Sulfolobus tokodaii)).